Reading from the N-terminus, the 383-residue chain is Cyclin-D4-2 (383 aa).

Residues 51 to 62 show a composition bias toward gly residues; that stretch reads AAGGGGGSGGGG. Disordered regions lie at residues 51-70, 313-335, and 354-383; these read AAGG…EDMF, QPKP…PESP, and ATIA…KLSR. Over residues 323 to 335 the composition is skewed to low complexity; that stretch reads SASASSSSVPESP.

Belongs to the cyclin family. Cyclin D subfamily.

The sequence is that of Cyclin-D4-2 (CYCD4-2) from Oryza sativa subsp. japonica (Rice).